Reading from the N-terminus, the 245-residue chain is tRNA pseudouridine synthase A (245 aa).

D52 acts as the Nucleophile in catalysis. Y111 provides a ligand contact to substrate.

It belongs to the tRNA pseudouridine synthase TruA family. In terms of assembly, homodimer.

It catalyses the reaction uridine(38/39/40) in tRNA = pseudouridine(38/39/40) in tRNA. Functionally, formation of pseudouridine at positions 38, 39 and 40 in the anticodon stem and loop of transfer RNAs. The sequence is that of tRNA pseudouridine synthase A from Rickettsia canadensis (strain McKiel).